A 636-amino-acid polypeptide reads, in one-letter code: LEAF RUST 10 DISEASE-RESISTANCE LOCUS RECEPTOR-LIKE PROTEIN KINASE-like 1.5 (636 aa).

Positions 1-26 (MSQPPWRCFSLLIFVLTIFSTKPSSA) are cleaved as a signal peptide. The Extracellular portion of the chain corresponds to 27-257 (STSCSSSFHC…NNKRVNHIAV (231 aa)). N-linked (GlcNAc...) asparagine glycans are attached at residues Asn73, Asn102, Asn146, and Asn224. Residues 258-278 (LSLIFALTCLLLVFSVAVAIF) form a helical membrane-spanning segment. Residues 279–636 (RSRRASFLSS…RVADDDVAKN (358 aa)) are Cytoplasmic-facing. The 305-residue stretch at 324-628 (FDPKRKIGDG…LRRIRSHTRV (305 aa)) folds into the Protein kinase domain. ATP contacts are provided by residues 330-338 (IGDGGFGSV) and Lys352. The active-site Proton acceptor is the Asp458.

Belongs to the protein kinase superfamily. Ser/Thr protein kinase family.

It is found in the cell membrane. The catalysed reaction is L-seryl-[protein] + ATP = O-phospho-L-seryl-[protein] + ADP + H(+). It catalyses the reaction L-threonyl-[protein] + ATP = O-phospho-L-threonyl-[protein] + ADP + H(+). This is LEAF RUST 10 DISEASE-RESISTANCE LOCUS RECEPTOR-LIKE PROTEIN KINASE-like 1.5 from Arabidopsis thaliana (Mouse-ear cress).